Here is a 297-residue protein sequence, read N- to C-terminus: Homeobox protein HMX3 (297 aa).

Disordered stretches follow at residues 24–43 (NSDS…KAGL) and 96–172 (AAQK…RKKK). Basic and acidic residues-rich tracts occupy residues 109-123 (TDRD…SDPD) and 145-166 (EDGK…ADKK). The homeobox DNA-binding region spans 170-229 (KKKTRTVFSRSQVFQLESTFDMKRYLSSSERAGLAASLHLTETQVKIWFQNRRNKWKRQL).

This sequence belongs to the HMX homeobox family. In terms of tissue distribution, expressed in the ear placode and vesicle and in cells forming the vestibulo-acoustic ganglion. Also expressed in the lateral line.

Its subcellular location is the nucleus. In terms of biological role, transcription factor involved in specification of neuronal cell types and which is required for inner ear and hypothalamus development. Binds to the 5'-CAAGTG-3' core sequence. The polypeptide is Homeobox protein HMX3 (hmx3) (Danio rerio (Zebrafish)).